We begin with the raw amino-acid sequence, 343 residues long: Aspartate-semialdehyde dehydrogenase (343 aa).

NADP(+) is bound at residue 11-14 (TGMV). Arginine 109 is a phosphate binding site. Cysteine 148 (acyl-thioester intermediate) is an active-site residue. Residue glutamine 174 coordinates substrate. 177 to 178 (SG) is an NADP(+) binding site. Glutamate 200 serves as a coordination point for substrate. Lysine 203 is a phosphate binding site. A substrate-binding site is contributed by arginine 233. The active-site Proton acceptor is histidine 240. Residue 321–322 (NT) participates in NADP(+) binding.

It belongs to the aspartate-semialdehyde dehydrogenase family. Homodimer.

The catalysed reaction is L-aspartate 4-semialdehyde + phosphate + NADP(+) = 4-phospho-L-aspartate + NADPH + H(+). It functions in the pathway amino-acid biosynthesis; L-lysine biosynthesis via DAP pathway; (S)-tetrahydrodipicolinate from L-aspartate: step 2/4. The protein operates within amino-acid biosynthesis; L-methionine biosynthesis via de novo pathway; L-homoserine from L-aspartate: step 2/3. Its pathway is amino-acid biosynthesis; L-threonine biosynthesis; L-threonine from L-aspartate: step 2/5. Its function is as follows. Catalyzes the NADPH-dependent formation of L-aspartate-semialdehyde (L-ASA) by the reductive dephosphorylation of L-aspartyl-4-phosphate. The polypeptide is Aspartate-semialdehyde dehydrogenase (Archaeoglobus fulgidus (strain ATCC 49558 / DSM 4304 / JCM 9628 / NBRC 100126 / VC-16)).